We begin with the raw amino-acid sequence, 373 residues long: Bifunctional enzyme IspD/IspF (373 aa).

The segment at 1–212 (MPDITLILLG…PCIEAPSGKT (212 aa)) is 2-C-methyl-D-erythritol 4-phosphate cytidylyltransferase. Residues 213-373 (LTGFGLDIHP…NLTYYNWKQK (161 aa)) are 2-C-methyl-D-erythritol 2,4-cyclodiphosphate synthase. A divalent metal cation is bound by residues Asp-219 and His-221. 4-CDP-2-C-methyl-D-erythritol 2-phosphate-binding positions include 219-221 (DIH) and 245-246 (HS). His-253 lines the a divalent metal cation pocket. 4-CDP-2-C-methyl-D-erythritol 2-phosphate is bound by residues 267 to 269 (DIG), 272 to 276 (YPDTD), 343 to 346 (TTAE), Phe-350, and Arg-353.

This sequence in the N-terminal section; belongs to the IspD/TarI cytidylyltransferase family. IspD subfamily. In the C-terminal section; belongs to the IspF family. It depends on a divalent metal cation as a cofactor.

It carries out the reaction 2-C-methyl-D-erythritol 4-phosphate + CTP + H(+) = 4-CDP-2-C-methyl-D-erythritol + diphosphate. The catalysed reaction is 4-CDP-2-C-methyl-D-erythritol 2-phosphate = 2-C-methyl-D-erythritol 2,4-cyclic diphosphate + CMP. Its pathway is isoprenoid biosynthesis; isopentenyl diphosphate biosynthesis via DXP pathway; isopentenyl diphosphate from 1-deoxy-D-xylulose 5-phosphate: step 2/6. It participates in isoprenoid biosynthesis; isopentenyl diphosphate biosynthesis via DXP pathway; isopentenyl diphosphate from 1-deoxy-D-xylulose 5-phosphate: step 4/6. In terms of biological role, bifunctional enzyme that catalyzes the formation of 4-diphosphocytidyl-2-C-methyl-D-erythritol from CTP and 2-C-methyl-D-erythritol 4-phosphate (MEP) (IspD), and catalyzes the conversion of 4-diphosphocytidyl-2-C-methyl-D-erythritol 2-phosphate (CDP-ME2P) to 2-C-methyl-D-erythritol 2,4-cyclodiphosphate (ME-CPP) with a corresponding release of cytidine 5-monophosphate (CMP) (IspF). The sequence is that of Bifunctional enzyme IspD/IspF from Sulfurovum sp. (strain NBC37-1).